The chain runs to 155 residues: MRKNRAEKRKVLPDPVYNSVLVTRAINAIMLDGKKGIAQKILYGSFDLIAQKTQKDPLEIFNKAVENIMPRLELKVRRIAGANYQVPTDVSPERKVTLALRWLVTLSRKRHEKTMLDKIANEIIDASNNTGASVKKREDTHKMAEANKAFAHMRM.

Belongs to the universal ribosomal protein uS7 family. Part of the 30S ribosomal subunit. Contacts proteins S9 and S11.

Its function is as follows. One of the primary rRNA binding proteins, it binds directly to 16S rRNA where it nucleates assembly of the head domain of the 30S subunit. Is located at the subunit interface close to the decoding center, probably blocks exit of the E-site tRNA. The polypeptide is Small ribosomal subunit protein uS7 (Mycoplasmoides gallisepticum (strain R(low / passage 15 / clone 2)) (Mycoplasma gallisepticum)).